The sequence spans 231 residues: Ribose-5-phosphate isomerase A (231 aa).

Substrate-binding positions include 31–34 (SGST), 87–90 (DGAD), and 100–103 (KGGG). The active-site Proton acceptor is the glutamate 109. Residue lysine 127 coordinates substrate.

The protein belongs to the ribose 5-phosphate isomerase family. Homodimer.

The enzyme catalyses aldehydo-D-ribose 5-phosphate = D-ribulose 5-phosphate. It participates in carbohydrate degradation; pentose phosphate pathway; D-ribose 5-phosphate from D-ribulose 5-phosphate (non-oxidative stage): step 1/1. In terms of biological role, catalyzes the reversible conversion of ribose-5-phosphate to ribulose 5-phosphate. This chain is Ribose-5-phosphate isomerase A, found in Chlamydia pneumoniae (Chlamydophila pneumoniae).